The sequence spans 520 residues: Catalase easC (520 aa).

His-71 is an active-site residue. Tyr-361 serves as a coordination point for heme.

This sequence belongs to the catalase family. Heme serves as cofactor.

It functions in the pathway alkaloid biosynthesis; ergot alkaloid biosynthesis. Its function is as follows. Catalase; part of the gene cluster that mediates the biosynthesis of fumiclavanine C, a fungal ergot alkaloid. DmaW catalyzes the first step of ergot alkaloid biosynthesis by condensing dimethylallyl diphosphate (DMAP) and tryptophan to form 4-dimethylallyl-L-tryptophan. The second step is catalyzed by the methyltransferase easF that methylates 4-dimethylallyl-L-tryptophan in the presence of S-adenosyl-L-methionine, resulting in the formation of 4-dimethylallyl-L-abrine. The catalase easC and the FAD-dependent oxidoreductase easE then transform 4-dimethylallyl-L-abrine to chanoclavine-I which is further oxidized by EasD in the presence of NAD(+), resulting in the formation of chanoclavine-I aldehyde. EasA reduces chanoclavine-I aldehyde to dihydrochanoclavine-I aldehyde that spontaneously dehydrates to form 6,8-dimethyl-6,7-didehydroergoline. EasG then catalyzes the reduction of 6,8-dimethyl-6,7-didehydroergoline to form festuclavine. Hydrolysis of festuclavine by easM then leads to the formation of fumigaclavine B which is in turn acetylated by easN to fumigaclavine A. Finally, easL catalyzes the conversion of fumigaclavine A into fumigaclavine C by attaching a dimethylallyl moiety to C-2 of the indole nucleus. The sequence is that of Catalase easC from Aspergillus fumigatus (strain ATCC MYA-4609 / CBS 101355 / FGSC A1100 / Af293) (Neosartorya fumigata).